Consider the following 619-residue polypeptide: Threonine--tRNA ligase (619 aa).

Residues Met1–Glu143 are editing domain. Positions Pro201 to Pro500 are catalytic. Cys293, His345, and His469 together coordinate Zn(2+).

Belongs to the class-II aminoacyl-tRNA synthetase family. Homodimer. It depends on Zn(2+) as a cofactor.

The protein resides in the cytoplasm. The enzyme catalyses tRNA(Thr) + L-threonine + ATP = L-threonyl-tRNA(Thr) + AMP + diphosphate + H(+). Functionally, catalyzes the attachment of threonine to tRNA(Thr) in a two-step reaction: L-threonine is first activated by ATP to form Thr-AMP and then transferred to the acceptor end of tRNA(Thr). Also edits incorrectly charged L-seryl-tRNA(Thr). In Methanothrix thermoacetophila (strain DSM 6194 / JCM 14653 / NBRC 101360 / PT) (Methanosaeta thermophila), this protein is Threonine--tRNA ligase.